A 233-amino-acid polypeptide reads, in one-letter code: ATP synthase subunit a, chloroplastic (233 aa).

4 helical membrane passes run 27–47 (VLLI…LGTL), 84–104 (VPFV…GALI), 122–142 (DINT…YAGF), and 192–212 (VLCL…GIFA).

The protein belongs to the ATPase A chain family. In terms of assembly, F-type ATPases have 2 components, CF(1) - the catalytic core - and CF(0) - the membrane proton channel. CF(1) has five subunits: alpha(3), beta(3), gamma(1), delta(1), epsilon(1). CF(0) has four main subunits: a, b, b' and c.

It is found in the plastid. The protein resides in the chloroplast thylakoid membrane. Key component of the proton channel; it plays a direct role in the translocation of protons across the membrane. This is ATP synthase subunit a, chloroplastic from Ochrosphaera neapolitana.